The following is a 310-amino-acid chain: Ribosomal RNA small subunit methyltransferase H (310 aa).

Residues 40-42 (GGH), Asp-59, Phe-89, Asp-104, and Gln-111 contribute to the S-adenosyl-L-methionine site.

The protein belongs to the methyltransferase superfamily. RsmH family.

The protein localises to the cytoplasm. The catalysed reaction is cytidine(1402) in 16S rRNA + S-adenosyl-L-methionine = N(4)-methylcytidine(1402) in 16S rRNA + S-adenosyl-L-homocysteine + H(+). Its function is as follows. Specifically methylates the N4 position of cytidine in position 1402 (C1402) of 16S rRNA. In Amoebophilus asiaticus (strain 5a2), this protein is Ribosomal RNA small subunit methyltransferase H.